The chain runs to 625 residues: BTB/POZ domain-containing protein At5g48130 (625 aa).

The region spanning 41–105 (ASVHVRVCNK…IYGCPTLIHP (65 aa)) is the BTB domain. One can recognise an NPH3 domain in the interval 217–469 (DTWIKDLTDL…VQALFIQQLN (253 aa)). Over residues 494 to 507 (VPSSRPLTSQQSPC) the composition is skewed to polar residues. Residues 494-513 (VPSSRPLTSQQSPCTDDETG) form a disordered region.

This sequence belongs to the NPH3 family.

The protein operates within protein modification; protein ubiquitination. In terms of biological role, may act as a substrate-specific adapter of an E3 ubiquitin-protein ligase complex (CUL3-RBX1-BTB) which mediates the ubiquitination and subsequent proteasomal degradation of target proteins. In Arabidopsis thaliana (Mouse-ear cress), this protein is BTB/POZ domain-containing protein At5g48130.